The following is a 528-amino-acid chain: Beta-hexosaminidase subunit alpha (528 aa).

The first 22 residues, 1–22 (MAGCRLWVSLLLAAALACLATA), serve as a signal peptide directing secretion. Residues 23 to 88 (LWPWPQYIQT…PRPSFSKKQQ (66 aa)) constitute a propeptide that is removed on maturation. A disulfide bridge links cysteine 58 with cysteine 104. 3 N-linked (GlcNAc...) asparagine glycosylation sites follow: asparagine 115, asparagine 157, and asparagine 295. Cysteine 277 and cysteine 328 are oxidised to a cystine. Glutamate 323 serves as the catalytic Proton donor. The interval 422-423 (NR) is critical for hydrolysis GM2 gangliosides. Residue asparagine 487 is glycosylated (N-linked (GlcNAc...) asparagine). Cysteine 504 and cysteine 521 form a disulfide bridge.

It belongs to the glycosyl hydrolase 20 family. In terms of assembly, there are 3 beta-hexosaminidase isozymes: isozyme A (hexosaminidase A) is a heterodimer composed of one subunit alpha and one subunit beta (chain A and B); isozyme B (hexosaminidase B) is a homodimer of two beta subunits (two chains A and B); isozyme S (hexosaminidase S) is a homodimer of two alpha subunits. The composition of the dimer (isozyme A versus isozyme S) has a significant effect on the substrate specificity of the alpha subunit active site.

It localises to the lysosome. It catalyses the reaction Hydrolysis of terminal non-reducing N-acetyl-D-hexosamine residues in N-acetyl-beta-D-hexosaminides.. The enzyme catalyses N-acetyl-beta-D-galactosaminyl-(1-&gt;4)-beta-D-3-sulfogalactosyl-(1-&gt;4)-beta-D-glucosyl-(1&lt;-&gt;1')-ceramide + H2O = a beta-D-3-sulfogalactosyl-(1-&gt;4)-beta-D-glucosyl-(1&lt;-&gt;1')-ceramide + N-acetyl-beta-D-galactosamine. It carries out the reaction a ganglioside GM2 (d18:1(4E)) + H2O = a ganglioside GM3 (d18:1(4E)) + N-acetyl-beta-D-galactosamine. The catalysed reaction is a ganglioside GM2 + H2O = a ganglioside GM3 + N-acetyl-beta-D-galactosamine. It catalyses the reaction beta-D-GalNAc-(1-&gt;4)-alpha-L-IdoA-(1-&gt;3)-beta-D-GalNAc-4-sulfate-(1-&gt;4)-alpha-L-IdoA-(1-&gt;3)-D-GalNAc-4-sulfate + H2O = alpha-L-IdoA-(1-&gt;3)-beta-D-GalNAc-4-sulfate-(1-&gt;4)-alpha-L-IdoA-(1-&gt;3)-D-GalNAc-4-sulfate + N-acetyl-D-galactosamine. The enzyme catalyses N-acetyl-beta-D-6-sulfogalactosaminyl-(1-&gt;4)-alpha-L-iduronyl-(1-&gt;3)-N-acetyl-D-6-sulfogalactosamine + H2O = alpha-L-iduronyl-(1-&gt;3)-N-acetyl-D-6-sulfogalactosamine + N-acetyl-D-6-sulfogalactosamine. With respect to regulation, addition of GM2A stimulates the hydrolysis of sulfated glycosphingolipid SM2 and the ganglioside GM2. Functionally, hydrolyzes the non-reducing end N-acetyl-D-hexosamine and/or sulfated N-acetyl-D-hexosamine of glycoconjugates, such as the oligosaccharide moieties from proteins and neutral glycolipids, or from certain mucopolysaccharides. The isozyme S is as active as the isozyme A on the anionic bis-sulfated glycans, the chondroitin-6-sulfate trisaccharide (C6S-3), and the dermatan sulfate pentasaccharide, and the sulfated glycosphingolipid SM2. The isozyme B does not hydrolyze each of these substrates, however hydrolyzes efficiently neutral oligosaccharide. Only the isozyme A is responsible for the degradation of GM2 gangliosides in the presence of GM2A. This Rattus norvegicus (Rat) protein is Beta-hexosaminidase subunit alpha.